The chain runs to 286 residues: Undecaprenyl-diphosphatase (286 aa).

7 helical membrane passes run 50–70 (GAAFTAITQLGTETAVIVYFW), 97–117 (MGWLVILGSLPIIVLGLIFQD), 126–146 (LWIVATMLIVFGLILAVADAV), 156–176 (LTYKHGIFYGFAQAMALIPGV), 200–220 (SFLLAIPAVFGSGLYQLYKVM), 236–256 (LATLIAFVVGYVIIGWFLKFV), and 264–284 (FVWYRIFLGLALYLLLGFNVI).

This sequence belongs to the UppP family.

The protein localises to the cell membrane. It carries out the reaction di-trans,octa-cis-undecaprenyl diphosphate + H2O = di-trans,octa-cis-undecaprenyl phosphate + phosphate + H(+). In terms of biological role, catalyzes the dephosphorylation of undecaprenyl diphosphate (UPP). Confers resistance to bacitracin. The protein is Undecaprenyl-diphosphatase of Arthrobacter sp. (strain FB24).